A 401-amino-acid polypeptide reads, in one-letter code: 8-amino-7-oxononanoate synthase (401 aa).

Arginine 19 contacts substrate. 106-107 (GY) contributes to the pyridoxal 5'-phosphate binding site. Residue histidine 131 participates in substrate binding. Pyridoxal 5'-phosphate is bound by residues serine 176, histidine 204, and threonine 233. Position 236 is an N6-(pyridoxal phosphate)lysine (lysine 236). Threonine 350 provides a ligand contact to substrate.

Belongs to the class-II pyridoxal-phosphate-dependent aminotransferase family. BioF subfamily. In terms of assembly, homodimer. Pyridoxal 5'-phosphate serves as cofactor.

The enzyme catalyses 6-carboxyhexanoyl-[ACP] + L-alanine + H(+) = (8S)-8-amino-7-oxononanoate + holo-[ACP] + CO2. The protein operates within cofactor biosynthesis; biotin biosynthesis. In terms of biological role, catalyzes the decarboxylative condensation of pimeloyl-[acyl-carrier protein] and L-alanine to produce 8-amino-7-oxononanoate (AON), [acyl-carrier protein], and carbon dioxide. The chain is 8-amino-7-oxononanoate synthase from Pseudomonas aeruginosa (strain LESB58).